The following is a 235-amino-acid chain: Coiled-coil domain-containing protein 71L (235 aa).

Residues 1–13 (MRRSMKRRRRRRP) show a composition bias toward basic residues. The segment at 1-30 (MRRSMKRRRRRRPVAPATAARGGDFRAEDG) is disordered. 2 positions are modified to phosphoserine: S52 and S89. The interval 109 to 167 (PDPPGPPTARGQARRPVPRAAARRRRRGARAAAARRRKPRPPPPPPPPPEESCPAKPVA) is disordered. Positions 120–148 (QARRPVPRAAARRRRRGARAAAARRRKPR) are enriched in basic residues. A compositionally biased stretch (pro residues) spans 149-159 (PPPPPPPPPEE). At T185 the chain carries Phosphothreonine. S198 is modified (phosphoserine).

The polypeptide is Coiled-coil domain-containing protein 71L (CCDC71L) (Homo sapiens (Human)).